The chain runs to 346 residues: Nicotinate-nucleotide--dimethylbenzimidazole phosphoribosyltransferase (346 aa).

E313 acts as the Proton acceptor in catalysis.

This sequence belongs to the CobT family.

It catalyses the reaction 5,6-dimethylbenzimidazole + nicotinate beta-D-ribonucleotide = alpha-ribazole 5'-phosphate + nicotinate + H(+). It functions in the pathway nucleoside biosynthesis; alpha-ribazole biosynthesis; alpha-ribazole from 5,6-dimethylbenzimidazole: step 1/2. In terms of biological role, catalyzes the synthesis of alpha-ribazole-5'-phosphate from nicotinate mononucleotide (NAMN) and 5,6-dimethylbenzimidazole (DMB). In Parabacteroides distasonis (strain ATCC 8503 / DSM 20701 / CIP 104284 / JCM 5825 / NCTC 11152), this protein is Nicotinate-nucleotide--dimethylbenzimidazole phosphoribosyltransferase.